We begin with the raw amino-acid sequence, 1148 residues long: Zinc finger CCCH domain-containing protein 18 (1148 aa).

Low complexity predominate over residues 1–13; sequence MDTPESPTQSPQS. 3 disordered regions span residues 1 to 315, 380 to 417, and 521 to 1127; these read MDTP…PMDR, DPFSPNGAPPGGAAGGGPHPLMPANPWGAPAVEELPPP, and YTET…REEL. Composition is skewed to basic and acidic residues over residues 53-73 and 82-96; these read VPEHGGDSDSEDRDRQPAGRE and EDYKLDREEREDIHQ. Composition is skewed to acidic residues over residues 144–156 and 167–176; these read ERGDDDEEEEEDE and ELEEEEDEEE. Over residues 190-202 the composition is skewed to basic and acidic residues; the sequence is DLKDESSVSRDLD. Composition is skewed to acidic residues over residues 203–214 and 233–245; these read EHELDYDEEVPE and EDGEDEEEEDEEE. Residues 261–289 are compositionally biased toward basic and acidic residues; that stretch reads DNRDTPLRKSEDSREGGRRDSFRDKKKEE. The segment covering 290–306 has biased composition (acidic residues); sequence DDGEIDEGEIDDDDLEE. A compositionally biased stretch (gly residues) spans 388–397; the sequence is PPGGAAGGGP. Residues 530–615 show a composition bias toward basic and acidic residues; that stretch reads PDRERERDPR…EKKDEKEKTL (86 aa). A coiled-coil region spans residues 543–584; sequence RERERERERDHRERERRQREREREREREREKDSRRRKDEWDR. Pro residues predominate over residues 622–631; the sequence is NMPPRGPMEP. Over residues 632-646 the composition is skewed to basic and acidic residues; sequence PTKKDMLSVTKRPDE. Ser666 carries the post-translational modification Phosphoserine. The segment covering 677–740 has biased composition (low complexity); that stretch reads SGSSVSLSNS…SRSGSFSSSP (64 aa). Composition is skewed to pro residues over residues 783–800 and 807–817; these read KVMPSPSLPEQPGKPPKP and PPNPRPPGRPP. Residues 818–833 show a composition bias toward basic and acidic residues; it reads GPREPREPPNMREGRK. Low complexity-rich tracts occupy residues 847–875, 882–903, and 914–925; these read VSGSVSGSSYSGSSSRSRSRSSSASASRS, SLSVSSVSSVSSASSSSSSVRS, and ASPVSSASSRSP. 2 stretches are compositionally biased toward basic and acidic residues: residues 933 to 964 and 1012 to 1029; these read DRGPPRERGPNKERGKPPKKDEPFKDERKRVD and QTDRSNRKRYFPSDKERP. The residue at position 1056 (Ser1056) is a Phosphoserine. Low complexity-rich tracts occupy residues 1083 to 1098 and 1107 to 1119; these read PAKSSGKGPAAASAAK and GSASGSAPGKPSS. A coiled-coil region spans residues 1118-1146; that stretch reads SSTLSRREELLKQLKAVEDAIARKRAKIP.

Its subcellular location is the nucleus. In Danio rerio (Zebrafish), this protein is Zinc finger CCCH domain-containing protein 18 (zc3h18).